Consider the following 530-residue polypeptide: Bifunctional purine biosynthesis protein PurH (530 aa).

The 149-residue stretch at 1-149 (MASDFLPVHR…KNFARVAVAT (149 aa)) folds into the MGS-like domain.

Belongs to the PurH family.

The catalysed reaction is (6R)-10-formyltetrahydrofolate + 5-amino-1-(5-phospho-beta-D-ribosyl)imidazole-4-carboxamide = 5-formamido-1-(5-phospho-D-ribosyl)imidazole-4-carboxamide + (6S)-5,6,7,8-tetrahydrofolate. It carries out the reaction IMP + H2O = 5-formamido-1-(5-phospho-D-ribosyl)imidazole-4-carboxamide. It participates in purine metabolism; IMP biosynthesis via de novo pathway; 5-formamido-1-(5-phospho-D-ribosyl)imidazole-4-carboxamide from 5-amino-1-(5-phospho-D-ribosyl)imidazole-4-carboxamide (10-formyl THF route): step 1/1. It functions in the pathway purine metabolism; IMP biosynthesis via de novo pathway; IMP from 5-formamido-1-(5-phospho-D-ribosyl)imidazole-4-carboxamide: step 1/1. The protein is Bifunctional purine biosynthesis protein PurH of Xylella fastidiosa (strain M12).